A 228-amino-acid polypeptide reads, in one-letter code: Thermonuclease (228 aa).

An N-terminal signal peptide occupies residues 1–23; the sequence is MTEYLLSAGICMAIVSILLIGMA. The propeptide occupies 24–60; that stretch reads ISNVSKGQYAKRFFFFATSCLVLTLVVVSSLSSSANA. Asp-100 contacts Ca(2+). Arg-114 is a catalytic residue. Ca(2+) contacts are provided by Asp-119 and Thr-120. Active-site residues include Glu-122 and Arg-166.

This sequence belongs to the thermonuclease family. Requires Ca(2+) as cofactor.

It localises to the secreted. It carries out the reaction Endonucleolytic cleavage to nucleoside 3'-phosphates and 3'-phosphooligonucleotide end-products.. Enzyme that catalyzes the hydrolysis of both DNA and RNA at the 5' position of the phosphodiester bond. This is Thermonuclease (nuc) from Staphylococcus aureus (strain MSSA476).